Here is an 86-residue protein sequence, read N- to C-terminus: Small ribosomal subunit protein bS16 (86 aa).

It belongs to the bacterial ribosomal protein bS16 family.

This chain is Small ribosomal subunit protein bS16, found in Methylacidiphilum infernorum (isolate V4) (Methylokorus infernorum (strain V4)).